Consider the following 486-residue polypeptide: F-box protein At1g80960 (486 aa).

One can recognise an F-box domain in the interval 49 to 97; it reads VDWISKLPDDVLLIILSRLSTEEAIRTSVVSKRWEHVWNQMSHLVFDMR.

The chain is F-box protein At1g80960 from Arabidopsis thaliana (Mouse-ear cress).